Here is a 421-residue protein sequence, read N- to C-terminus: MQYEAYQWGQSHPTSTSGSMLQDTPTAASQPVKRHAACDECRKRKLKCSGEISGCSRCIKQSLSCHYSVQKQMGRPPKKRLREDNDDISLLNIPDNDPWANSQIAHVPDFGAAIADVSEEPQILSSTHLSPYSFPYRLSTDEDHRHTWQLAPNESMSSIPATTTPWPDFSSVSAAAPKPFIMPPGLTPPIMPSTDSSPDQECSCLSYLYLCLSHLSSLKPFPISQHTICSLYISAKTAQSVIRCQSCPNRFDTGLQNVMFTGTLLNVIADSWLRVSRAEACELGNQVAPPAYAAKMNRSPDLRGAWNDYLRQLVRFSVIRGPMDIDAQTPCAQQAPSVLDLVEEMEARQRRWHESPDSHPLPPDQRLNIPSDQNCLNRDEQDLLCIRVAKSARNVIAKFGFQSDEYPESVPSLSPDSSISP.

The tract at residues Met-1–Ser-29 is disordered. Polar residues predominate over residues Trp-8–Ser-29. Residues Cys-38–Cys-65 constitute a DNA-binding region (zn(2)-C6 fungal-type). A compositionally biased stretch (basic and acidic residues) spans Glu-346–Asp-357. Residues Glu-346–Ser-371 are disordered.

The protein resides in the nucleus. In terms of biological role, transcription factor that is important for oxidative stress resistance and essential for gliotoxin (GT) self-protection through the regulation of a gene encoding a putative gliT homolog, even if E.nidulans does not produce gliotoxin itself. This is Transcription factor rglT from Emericella nidulans (strain FGSC A4 / ATCC 38163 / CBS 112.46 / NRRL 194 / M139) (Aspergillus nidulans).